The following is a 587-amino-acid chain: Cyclic GMP-AMP synthase-like receptor (587 aa).

Disordered regions lie at residues 26–48 and 77–229; these read IHPSSADGRGLRPSTDTRGRRDD and TRMH…DRPL. Basic and acidic residues-rich tracts occupy residues 95-138, 150-185, and 204-228; these read TRDR…RDSL, DGARPETLTPRHEDHERHNSDRDVVKGVAKVQRESL, and PESRPAKYKESPKQSRTTEEPHDRP. Glu307, Asp309, and Asp409 together coordinate Mg(2+).

This sequence belongs to the mab-21 family. The cofactor is Mg(2+). Requires Mn(2+) as cofactor.

It carries out the reaction UTP + ATP = 2',3'-cUAMP + 2 diphosphate. Its function is as follows. Nucleotidyltransferase that catalyzes the formation of cyclic UMP-AMP (2',3'-cUAMP) from ATP and UTP and plays a key role in innate immunity. Acts as a key sensor of double-stranded DNA (dsDNA), the presence of dsDNA in the cytoplasm being a danger signal that triggers the immune responses. Directly binds dsDNA, activating the nucleotidyltransferase activity, leading to synthesis of 2',3'-cUAMP, a second messenger that binds to and activates Sting, thereby triggering the immune response via activation of the NF-kappa-B transcription factor. The polypeptide is Cyclic GMP-AMP synthase-like receptor (Magallana gigas (Pacific oyster)).